The sequence spans 594 residues: UvrABC system protein C (594 aa).

One can recognise a GIY-YIG domain in the interval 13–99 (HSSGVYQYFD…IKQLKPKYNI (87 aa)). Residues 205–240 (DKLIKELELKMERLSNNLRFEEALIYRDRIAKIQKI) enclose the UVR domain.

It belongs to the UvrC family. Interacts with UvrB in an incision complex.

The protein localises to the cytoplasm. In terms of biological role, the UvrABC repair system catalyzes the recognition and processing of DNA lesions. UvrC both incises the 5' and 3' sides of the lesion. The N-terminal half is responsible for the 3' incision and the C-terminal half is responsible for the 5' incision. The polypeptide is UvrABC system protein C (Helicobacter pylori (strain HPAG1)).